Here is a 34-residue protein sequence, read N- to C-terminus: Chlorotoxin-like peptide AaCtx (34 aa).

4 cysteine pairs are disulfide-bonded: cysteine 2/cysteine 19, cysteine 5/cysteine 27, cysteine 16/cysteine 32, and cysteine 20/cysteine 34.

It belongs to the short scorpion toxin superfamily. Chloride channel inhibitor family. As to expression, expressed by the venom gland.

The protein resides in the secreted. Toxin with unknown function in healthy organisms. On glioma cells, interacts with chloride channels (probably ClC-3/CLCN3) and MMP2 at the surface of glioma cells. This complex is then internalized via caveolae, thus inhibiting the chloride channels necessary for cell shrinkage and tumor propagation. Inhibits migration and invasion of U87 glioma cells expressing CLCN3/ClC-3 voltage-gated chloride channels. The chain is Chlorotoxin-like peptide AaCtx from Androctonus australis (Sahara scorpion).